We begin with the raw amino-acid sequence, 515 residues long: Zinc metalloproteinase-disintegrin BA-5A (515 aa).

An N-terminal signal peptide occupies residues 1–20; sequence MMQVLLVTICLAVFPYQGSS. Residues 21-193 constitute a propeptide that is removed on maturation; that stretch reads IILESGNVND…KEASQLVATS (173 aa). Residues 203–399 form the Peptidase M12B domain; it reads RYIKYFIVVD…YKPDCTLIRP (197 aa). N-linked (GlcNAc...) asparagine glycosylation occurs at asparagine 263. 11 disulfides stabilise this stretch: cysteine 314/cysteine 394, cysteine 354/cysteine 378, cysteine 356/cysteine 361, cysteine 410/cysteine 429, cysteine 421/cysteine 439, cysteine 423/cysteine 434, cysteine 433/cysteine 456, cysteine 447/cysteine 453, cysteine 452/cysteine 478, cysteine 465/cysteine 485, and cysteine 472/cysteine 497. Residue histidine 339 coordinates Zn(2+). Glutamate 340 is an active-site residue. Residues histidine 343 and histidine 349 each coordinate Zn(2+). Asparagine 377 carries an N-linked (GlcNAc...) asparagine glycan. Residues 407-493 form the Disintegrin domain; it reads PPVCGNDILE…DCPIDHFHRN (87 aa). The short motif at 471-473 is the D/ECD-tripeptide element; the sequence is ECD.

The protein belongs to the venom metalloproteinase (M12B) family. P-II subfamily. Monomer. The cofactor is Zn(2+). Expressed by the venom gland.

It is found in the secreted. Functionally, snake venom zinc metalloprotease that possesses hemorrhagic activity and degrades alpha chain of fibrinogen (FGA). May inhibit alpha-2/beta-1 integrin (ITGA2/ITGB1). This is Zinc metalloproteinase-disintegrin BA-5A from Bitis arietans (African puff adder).